Here is a 462-residue protein sequence, read N- to C-terminus: Putative ABC transporter A445L (462 aa).

Belongs to the protein kinase superfamily. ADCK protein kinase family.

In Chlorella (PBCV-1), this protein is Putative ABC transporter A445L.